Reading from the N-terminus, the 659-residue chain is Zeaxanthin epoxidase, chloroplastic (659 aa).

Residues 1–50 (MALLSATAPAKTRFSLFSHEEAQHPHPHALSACCGGGASGKRQRARARVA) constitute a chloroplast transit peptide. Residues 79–107 (RVLV…TVFE) and 357–370 (TFNW…LLGD) contribute to the FAD site. An FHA domain is found at 553–607 (LSIGSRSDPSNSTASLALPLPQISENHATITCKNKAFYVTDNGSEHGTWITDNEG).

The cofactor is FAD. As to expression, expressed in young microspores.

Its subcellular location is the plastid. The protein resides in the chloroplast membrane. It localises to the chloroplast thylakoid membrane. It catalyses the reaction all-trans-zeaxanthin + 4 reduced [2Fe-2S]-[ferredoxin] + 2 O2 + 4 H(+) = all-trans-violaxanthin + 4 oxidized [2Fe-2S]-[ferredoxin] + 2 H2O. Its pathway is plant hormone biosynthesis; abscisate biosynthesis. Functionally, zeaxanthin epoxidase that plays an important role in the xanthophyll cycle and abscisic acid (ABA) biosynthesis. Converts zeaxanthin into antheraxanthin and subsequently violaxanthin. Required for resistance to osmotic and drought stresses, seed development and dormancy. The chain is Zeaxanthin epoxidase, chloroplastic (ZEP) from Oryza sativa subsp. japonica (Rice).